We begin with the raw amino-acid sequence, 188 residues long: Elongation factor P (188 aa).

Position 34 is an N6-(3,6-diaminohexanoyl)-5-hydroxylysine (K34).

It belongs to the elongation factor P family. In terms of processing, is beta-lysylated on the epsilon-amino group of Lys-34 by the combined action of EpmA and EpmB, and then hydroxylated on the C5 position of the same residue by EpmC. Lysylation is critical for the stimulatory effect of EF-P on peptide-bond formation. The lysylation moiety would extend toward the peptidyltransferase center and stabilize the terminal 3-CCA end of the tRNA. The hydroxylation of the C5 position on Lys-34 would allow additional potential stabilizing hydrogen-bond interactions with the P-tRNA.

The protein resides in the cytoplasm. The protein operates within protein biosynthesis; polypeptide chain elongation. Its function is as follows. Involved in peptide bond synthesis. Alleviates ribosome stalling that occurs when 3 or more consecutive Pro residues or the sequence PPG is present in a protein, possibly by augmenting the peptidyl transferase activity of the ribosome. Modification of Lys-34 is required for alleviation. The polypeptide is Elongation factor P (Shigella boydii serotype 18 (strain CDC 3083-94 / BS512)).